The following is a 798-amino-acid chain: Translation initiation factor IF-2 (798 aa).

The interval 40-207 (SEQETKLRQA…QQESAKPAVP (168 aa)) is disordered. Low complexity predominate over residues 57-186 (NTQSKATNNQ…RNNFNNQNRN (130 aa)). The span at 187–196 (RFNKKGKKGK) shows a compositional bias: basic residues. The region spanning 300-469 (TRPPVVTIMG…LLIAEVEDLK (170 aa)) is the tr-type G domain. Positions 309–316 (GHVDHGKT) are G1. Residue 309–316 (GHVDHGKT) coordinates GTP. The segment at 334-338 (GITQH) is G2. Positions 355–358 (DTPG) are G3. GTP-binding positions include 355–359 (DTPGH) and 409–412 (NKID). The interval 409 to 412 (NKID) is G4. The interval 445–447 (SAK) is G5.

The protein belongs to the TRAFAC class translation factor GTPase superfamily. Classic translation factor GTPase family. IF-2 subfamily.

It is found in the cytoplasm. Functionally, one of the essential components for the initiation of protein synthesis. Protects formylmethionyl-tRNA from spontaneous hydrolysis and promotes its binding to the 30S ribosomal subunits. Also involved in the hydrolysis of GTP during the formation of the 70S ribosomal complex. This chain is Translation initiation factor IF-2, found in Enterococcus faecalis (strain ATCC 700802 / V583).